Consider the following 842-residue polypeptide: DNA gyrase subunit A (842 aa).

A Topo IIA-type catalytic domain is found at 42 to 511 (LPEVRDGLKP…ADGEVSDEDL (470 aa)). The active-site O-(5'-phospho-DNA)-tyrosine intermediate is tyrosine 130. A GyrA-box motif is present at residues 538–544 (QKRGGKG). The interval 822–842 (EDEAAESISESDADTAESPEA) is disordered.

It belongs to the type II topoisomerase GyrA/ParC subunit family. Heterotetramer, composed of two GyrA and two GyrB chains. In the heterotetramer, GyrA contains the active site tyrosine that forms a transient covalent intermediate with DNA, while GyrB binds cofactors and catalyzes ATP hydrolysis.

The protein localises to the cytoplasm. It catalyses the reaction ATP-dependent breakage, passage and rejoining of double-stranded DNA.. Inhibited by 4-quinoline drugs (nalidixic acid, ciprofloxacin, ofloxacin), although it is much less sensitive than the corresponding enzyme from E.coli. A type II topoisomerase that negatively supercoils closed circular double-stranded (ds) DNA in an ATP-dependent manner to modulate DNA topology and maintain chromosomes in an underwound state. Negative supercoiling favors strand separation, and DNA replication, transcription, recombination and repair, all of which involve strand separation. Also able to catalyze the interconversion of other topological isomers of dsDNA rings, including catenanes and knotted rings. Type II topoisomerases break and join 2 DNA strands simultaneously in an ATP-dependent manner. This is DNA gyrase subunit A from Mycolicibacterium smegmatis (strain ATCC 700084 / mc(2)155) (Mycobacterium smegmatis).